The sequence spans 739 residues: uncharacterized protein (739 aa).

The next 8 helical transmembrane spans lie at 53-73 (LALG…ALTV), 90-110 (WHLF…AAIP), 114-134 (LMFI…GTFM), 178-198 (TYIL…QLGL), 421-441 (LIWI…VCIV), 457-477 (AFLR…LALM), 491-511 (GLAM…LPAV), and 532-552 (IVYF…SWMY).

Belongs to the aromatic acid exporter ArAE (TC 2.A.85) family.

It localises to the cell membrane. This is an uncharacterized protein from Gluconobacter oxydans (strain 621H) (Gluconobacter suboxydans).